Consider the following 808-residue polypeptide: Phospholipase D alpha 1 (808 aa).

The C2 domain occupies 1–125 (MAQILLHGTL…LEGEEIDKWV (125 aa)). Residue aspartate 186 coordinates Ca(2+). The PLD phosphodiesterase 1 domain maps to 326-364 (TMFTHHQKIVVVDSELPSGESEKRRILSFVGGIDLCDGR). Active-site residues include histidine 331, lysine 333, and aspartate 338. A 1,2-diacyl-sn-glycero-3-phosphate is bound at residue histidine 331. The Ca(2+) site is built by histidine 370 and histidine 404. A 1,2-diacyl-sn-glycero-3-phosphate contacts are provided by glutamine 520 and histidine 659. Residues 654-681 (FMIYVHSKMMIVDDEYIIVGSANINQRS) form the PLD phosphodiesterase 2 domain. Active-site residues include histidine 659, lysine 661, and aspartate 666. Residue glutamate 720 coordinates Ca(2+).

This sequence belongs to the phospholipase D family. C2-PLD subfamily. It depends on Ca(2+) as a cofactor.

It catalyses the reaction a 1,2-diacyl-sn-glycero-3-phosphocholine + H2O = a 1,2-diacyl-sn-glycero-3-phosphate + choline + H(+). Functionally, hydrolyzes glycerol-phospholipids at the terminal phosphodiesteric bond. Plays an important role in various cellular processes. The chain is Phospholipase D alpha 1 (PLD1) from Nicotiana tabacum (Common tobacco).